Consider the following 393-residue polypeptide: Dual specificity mitogen-activated protein kinase kinase 1 (393 aa).

Positions 1–27 (MPKKKPTPIQLNPAPDGSAVNGTSSAE) are disordered. A Protein kinase domain is found at 68-361 (FEKISELGAG…LKQLMVHAFI (294 aa)). Residues 74–82 (LGAGNGGVV) and Lys97 contribute to the ATP site. Asp190 serves as the catalytic Proton acceptor. Phosphoserine; by RAF is present on residues Ser218 and Ser222. The interval 270-307 (ELELMFGCQVEGDAAETPPRPRTPGRPLSSYGMDSRPP) is RAF1-binding. Thr286 carries the post-translational modification Phosphothreonine. A Phosphothreonine; by MAPK1 modification is found at Thr292. Ser298 bears the Phosphoserine; by PAK mark.

Belongs to the protein kinase superfamily. STE Ser/Thr protein kinase family. MAP kinase kinase subfamily. As to quaternary structure, found in a complex with at least BRAF, HRAS, MAP2K1, MAPK3/ERK1 and RGS14. Forms a heterodimer with MAP2K2/MEK2. Forms heterodimers with KSR2 which further dimerize to form tetramers. Interacts with KSR1 or KSR2 and BRAF; the interaction with KSR1 or KSR2 mediates KSR1-BRAF or KSR2-BRAF dimerization. Interacts with ARBB2, LAMTOR3, MAPK1/ERK2 and RAF1. Interacts with MAPK1/ERK2. Interacts with MORG1. Interacts with PPARG. Interacts with SGK1. Interacts with BIRC6/bruce. Interacts with KAT7; the interaction promotes KAT7 phosphorylation. Interacts with RAF1 and NEK10; the interaction is required for ERK1/2-signaling pathway activation in response to UV irradiation. Interacts with TRAF3IP3. Interacts with MOS. Post-translationally, phosphorylation at Ser-218 and Ser-222 by MAP kinase kinase kinases (RAF or MEKK1) positively regulates the kinase activity. Also phosphorylated at Thr-292 by MAPK1/ERK2 and at Ser-298 by PAK. MAPK1/ERK2 phosphorylation of Thr-292 occurs in response to cellular adhesion and leads to inhibition of Ser-298 phosphorylation by PAK. Autophosphorylated at Ser-218 and Ser-222, autophosphosphorylation is promoted by NEK10 following UV irradiation.

The protein localises to the cytoplasm. It is found in the cytoskeleton. Its subcellular location is the microtubule organizing center. The protein resides in the centrosome. It localises to the spindle pole body. The protein localises to the nucleus. It is found in the membrane. The enzyme catalyses L-seryl-[protein] + ATP = O-phospho-L-seryl-[protein] + ADP + H(+). The catalysed reaction is L-threonyl-[protein] + ATP = O-phospho-L-threonyl-[protein] + ADP + H(+). It catalyses the reaction L-tyrosyl-[protein] + ATP = O-phospho-L-tyrosyl-[protein] + ADP + H(+). Ras proteins such as HRAS mediate the activation of RAF proteins such as RAF1 or BRAF which in turn activate extracellular signal-regulated kinases (ERK) through MAPK (mitogen-activated protein kinases) and ERK kinases MAP2K1/MEK1 and MAP2K2/MEK2. Activation occurs through phosphorylation of Ser-218 and Ser-222. MAP2K1/MEK1 binds KSR1 or KSR2 releasing the inhibitory intramolecular interaction between KSR1 or KSR2 protein kinase and N-terminal domains. This allows KSR1 or KSR2 dimerization with BRAF leading to BRAF activation and phosphorylation of MAP2K1. MAP2K1/MEK1 is also the target of negative feed-back regulation by its substrate kinases, such as MAPK1/ERK2. These phosphorylate MAP2K1/MEK1 on Thr-292, thereby facilitating dephosphorylation of the activating residues Ser-218 and Ser-222. Inhibited by serine/threonine phosphatase 2A. Its function is as follows. Dual specificity protein kinase which acts as an essential component of the MAP kinase signal transduction pathway. Binding of extracellular ligands such as growth factors, cytokines and hormones to their cell-surface receptors activates RAS and this initiates RAF1 activation. RAF1 then further activates the dual-specificity protein kinases MAP2K1/MEK1 and MAP2K2/MEK2. Both MAP2K1/MEK1 and MAP2K2/MEK2 function specifically in the MAPK/ERK cascade, and catalyze the concomitant phosphorylation of a threonine and a tyrosine residue in a Thr-Glu-Tyr sequence located in the extracellular signal-regulated kinases MAPK3/ERK1 and MAPK1/ERK2, leading to their activation and further transduction of the signal within the MAPK/ERK cascade. Activates BRAF in a KSR1 or KSR2-dependent manner; by binding to KSR1 or KSR2 releases the inhibitory intramolecular interaction between KSR1 or KSR2 protein kinase and N-terminal domains which promotes KSR1 or KSR2-BRAF dimerization and BRAF activation. Depending on the cellular context, this pathway mediates diverse biological functions such as cell growth, adhesion, survival and differentiation, predominantly through the regulation of transcription, metabolism and cytoskeletal rearrangements. One target of the MAPK/ERK cascade is peroxisome proliferator-activated receptor gamma (PPARG), a nuclear receptor that promotes differentiation and apoptosis. MAP2K1/MEK1 has been shown to export PPARG from the nucleus. The MAPK/ERK cascade is also involved in the regulation of endosomal dynamics, including lysosome processing and endosome cycling through the perinuclear recycling compartment (PNRC), as well as in the fragmentation of the Golgi apparatus during mitosis. The sequence is that of Dual specificity mitogen-activated protein kinase kinase 1 (MAP2K1) from Oryctolagus cuniculus (Rabbit).